Consider the following 248-residue polypeptide: Ras-like protein family member 11B (248 aa).

The small GTPase-like stretch occupies residues 29 to 246 (AGRRLVKIAV…ALSAKVRTVT (218 aa)). GTP contacts are provided by residues 40–47 (GASGVGKT), 87–91 (DTPGI), and 152–155 (NKAD). Residues 205-229 (QQPSGTPEKRRTSLIPRPKSPNMQD) form a disordered region.

This sequence belongs to the small GTPase superfamily. Ras family.

It carries out the reaction GTP + H2O = GDP + phosphate + H(+). This chain is Ras-like protein family member 11B, found in Bos taurus (Bovine).